The following is a 221-amino-acid chain: Endo-1,4-beta-xylanase 11A (221 aa).

The signal sequence occupies residues 1 to 17 (MVSFTTLLTAVATAVSA). In terms of domain architecture, GH11 spans 28-218 (RGIQPGTGVH…SSGSAEIEVR (191 aa)). Asparagine 89 carries N-linked (GlcNAc...) asparagine glycosylation. Catalysis depends on glutamate 113, which acts as the Nucleophile. Glutamate 205 serves as the catalytic Proton donor.

The protein belongs to the glycosyl hydrolase 11 (cellulase G) family.

It localises to the secreted. The enzyme catalyses Endohydrolysis of (1-&gt;4)-beta-D-xylosidic linkages in xylans.. Its pathway is glycan degradation; xylan degradation. With respect to regulation, retains an activity of 52.5% in the presence of 5 mM SDS. Its function is as follows. Endo-1,4-beta-xylanase involved in the hydrolysis of xylan, a major structural heterogeneous polysaccharide found in plant biomass representing the second most abundant polysaccharide in the biosphere, after cellulose. Is an alkali-tolerant enzyme, exhibiting 50.6% of activity at pH 9.0, and 26.9% even at pH 10.0. This Humicola insolens (Soft-rot fungus) protein is Endo-1,4-beta-xylanase 11A.